The following is a 643-amino-acid chain: Phosphomethylpyrimidine synthase (643 aa).

Substrate-binding positions include N248, M277, Y306, H342, 362–364 (SRG), 403–406 (DGLR), and E442. H446 contacts Zn(2+). Residue Y469 coordinates substrate. Position 510 (H510) interacts with Zn(2+). C590, C593, and C598 together coordinate [4Fe-4S] cluster.

This sequence belongs to the ThiC family. As to quaternary structure, homodimer. It depends on [4Fe-4S] cluster as a cofactor.

It catalyses the reaction 5-amino-1-(5-phospho-beta-D-ribosyl)imidazole + S-adenosyl-L-methionine = 4-amino-2-methyl-5-(phosphooxymethyl)pyrimidine + CO + 5'-deoxyadenosine + formate + L-methionine + 3 H(+). It participates in cofactor biosynthesis; thiamine diphosphate biosynthesis. Catalyzes the synthesis of the hydroxymethylpyrimidine phosphate (HMP-P) moiety of thiamine from aminoimidazole ribotide (AIR) in a radical S-adenosyl-L-methionine (SAM)-dependent reaction. This chain is Phosphomethylpyrimidine synthase, found in Burkholderia pseudomallei (strain 1106a).